The primary structure comprises 698 residues: DNA ligase (698 aa).

NAD(+) is bound by residues 35–39 (DSVYD), 84–85 (SL), and E123. K125 serves as the catalytic N6-AMP-lysine intermediate. 4 residues coordinate NAD(+): R146, E183, K302, and K326. Positions 420, 423, 438, and 443 each coordinate Zn(2+). The BRCT domain maps to 612-698 (NGKGHLNGQT…QNSADTIHLL (87 aa)).

Belongs to the NAD-dependent DNA ligase family. LigA subfamily. Requires Mg(2+) as cofactor. It depends on Mn(2+) as a cofactor.

The enzyme catalyses NAD(+) + (deoxyribonucleotide)n-3'-hydroxyl + 5'-phospho-(deoxyribonucleotide)m = (deoxyribonucleotide)n+m + AMP + beta-nicotinamide D-nucleotide.. Functionally, DNA ligase that catalyzes the formation of phosphodiester linkages between 5'-phosphoryl and 3'-hydroxyl groups in double-stranded DNA using NAD as a coenzyme and as the energy source for the reaction. It is essential for DNA replication and repair of damaged DNA. The chain is DNA ligase from Synechococcus sp. (strain WH7803).